The sequence spans 236 residues: Dolichol-phosphate mannosyltransferase (236 aa).

Pro9, Tyr11, Glu13, Ile40, Asp42, Asp95, Ala96, Asp97, Arg124, Val160, Arg211, and Lys217 together coordinate GDP-alpha-D-mannose. Asp97 lines the Mg(2+) pocket. Residue Asp97 participates in Mn(2+) binding.

Belongs to the glycosyltransferase 2 family. In terms of assembly, component of the dolichol-phosphate mannose (DPM) synthase complex composed of dpm1, dpm2 and dpm3. It depends on Mg(2+) as a cofactor. Requires Mn(2+) as cofactor. Ca(2+) serves as cofactor.

It localises to the endoplasmic reticulum. The catalysed reaction is a di-trans,poly-cis-dolichyl phosphate + GDP-alpha-D-mannose = a di-trans,poly-cis-dolichyl beta-D-mannosyl phosphate + GDP. It functions in the pathway protein modification; protein glycosylation. Functionally, transfers mannose from GDP-mannose to dolichol monophosphate to form dolichol phosphate mannose (Dol-P-Man) which is the mannosyl donor in pathways leading to N-glycosylation, glycosyl phosphatidylinositol membrane anchoring, and O-mannosylation of proteins. This Schizosaccharomyces pombe (strain 972 / ATCC 24843) (Fission yeast) protein is Dolichol-phosphate mannosyltransferase.